We begin with the raw amino-acid sequence, 493 residues long: V-type proton ATPase subunit B (493 aa).

It belongs to the ATPase alpha/beta chains family. V-ATPase is a heteromultimeric enzyme composed of a peripheral catalytic V1 complex (main components: subunits A, B, C, D, E, and F) attached to an integral membrane V0 proton pore complex (main component: the proteolipid protein).

It localises to the cytoplasmic vesicle membrane. The protein localises to the endosome membrane. It is found in the contractile vacuole membrane. Vacuolar ATPase is responsible for acidifying a variety of intracellular compartments in eukaryotic cells. The B subunit is non-catalytic but combines with other subunits to form the catalytic complex. V-ATPase is responsible for energizing electrophoretic K(+)/2H(+) antiport by generating a transmembrane voltage of more than 200 mV. The chain is V-type proton ATPase subunit B (vatB) from Dictyostelium discoideum (Social amoeba).